Consider the following 149-residue polypeptide: Arginine repressor (149 aa).

The protein belongs to the ArgR family.

It localises to the cytoplasm. The protein operates within amino-acid biosynthesis; L-arginine biosynthesis [regulation]. Its function is as follows. Regulates arginine biosynthesis genes. This chain is Arginine repressor, found in Bacillus mycoides (strain KBAB4) (Bacillus weihenstephanensis).